Consider the following 144-residue polypeptide: MNTQILSQKTRYSAYIVYKTIYRFHGFKHIGVGFIGHGTPKAKRWERKDLGNDWLGCKKKFKASKKQKFYSNKSTFTDKPITHLIKLEEGEDGWMATEFGEFFAEGGGLLDCDEIVLSVIDIDYAYWKCGLIIQGIDIRPTKSP.

The protein is Putative protein PHLOEM PROTEIN 2-LIKE B4 (PP2B4) of Arabidopsis thaliana (Mouse-ear cress).